The following is a 398-amino-acid chain: Dihydrolipoyllysine-residue succinyltransferase component of 2-oxoglutarate dehydrogenase complex (398 aa).

A Lipoyl-binding domain is found at 2–77; sequence SIKIIIPSLG…TVGEEVGEIN (76 aa). Lys43 bears the N6-lipoyllysine mark. Positions 112–149 constitute a Peripheral subunit-binding (PSBD) domain; the sequence is ILAPSVQKLVTENKLDPNNIKGTGRGGRITKYDVLETI. Active-site residues include His369 and Asp373.

This sequence belongs to the 2-oxoacid dehydrogenase family. As to quaternary structure, forms a 24-polypeptide structural core with octahedral symmetry. Part of the 2-oxoglutarate dehydrogenase (OGDH) complex composed of E1 (2-oxoglutarate dehydrogenase), E2 (dihydrolipoamide succinyltransferase) and E3 (dihydrolipoamide dehydrogenase); the complex contains multiple copies of the three enzymatic components (E1, E2 and E3). Requires (R)-lipoate as cofactor.

The enzyme catalyses N(6)-[(R)-dihydrolipoyl]-L-lysyl-[protein] + succinyl-CoA = N(6)-[(R)-S(8)-succinyldihydrolipoyl]-L-lysyl-[protein] + CoA. It participates in amino-acid degradation; L-lysine degradation via saccharopine pathway; glutaryl-CoA from L-lysine: step 6/6. Functionally, E2 component of the 2-oxoglutarate dehydrogenase (OGDH) complex which catalyzes the second step in the conversion of 2-oxoglutarate to succinyl-CoA and CO(2). This chain is Dihydrolipoyllysine-residue succinyltransferase component of 2-oxoglutarate dehydrogenase complex (sucB), found in Rickettsia typhi (strain ATCC VR-144 / Wilmington).